Reading from the N-terminus, the 477-residue chain is Argininosuccinate lyase (477 aa).

It belongs to the lyase 1 family. Argininosuccinate lyase subfamily.

The protein localises to the cytoplasm. The enzyme catalyses 2-(N(omega)-L-arginino)succinate = fumarate + L-arginine. It participates in amino-acid biosynthesis; L-arginine biosynthesis; L-arginine from L-ornithine and carbamoyl phosphate: step 3/3. This is Argininosuccinate lyase from Acinetobacter baumannii (strain ACICU).